The sequence spans 101 residues: Urease subunit beta (101 aa).

The protein belongs to the urease beta subunit family. As to quaternary structure, heterotrimer of UreA (gamma), UreB (beta) and UreC (alpha) subunits. Three heterotrimers associate to form the active enzyme.

It is found in the cytoplasm. It carries out the reaction urea + 2 H2O + H(+) = hydrogencarbonate + 2 NH4(+). It functions in the pathway nitrogen metabolism; urea degradation; CO(2) and NH(3) from urea (urease route): step 1/1. This chain is Urease subunit beta, found in Azoarcus sp. (strain BH72).